We begin with the raw amino-acid sequence, 276 residues long: NH(3)-dependent NAD(+) synthetase (276 aa).

43–50 (GISGGVDS) lines the ATP pocket. Asp49 is a Mg(2+) binding site. Arg146 contributes to the deamido-NAD(+) binding site. Position 166 (Thr166) interacts with ATP. Position 171 (Glu171) interacts with Mg(2+). Residues Lys179 and Asp186 each contribute to the deamido-NAD(+) site. 2 residues coordinate ATP: Lys195 and Thr217. Deamido-NAD(+) is bound at residue 266-267 (HK).

The protein belongs to the NAD synthetase family. Homodimer.

The catalysed reaction is deamido-NAD(+) + NH4(+) + ATP = AMP + diphosphate + NAD(+) + H(+). It participates in cofactor biosynthesis; NAD(+) biosynthesis; NAD(+) from deamido-NAD(+) (ammonia route): step 1/1. Its function is as follows. Catalyzes the ATP-dependent amidation of deamido-NAD to form NAD. Uses ammonia as a nitrogen source. This Shewanella sediminis (strain HAW-EB3) protein is NH(3)-dependent NAD(+) synthetase.